An 87-amino-acid polypeptide reads, in one-letter code: uncharacterized protein (87 aa).

A run of 2 helical transmembrane segments spans residues 8 to 28 (IVVL…IFDL) and 47 to 67 (LAGS…LIGL).

The protein localises to the cell membrane. This is an uncharacterized protein from Bacillus subtilis (strain 168).